We begin with the raw amino-acid sequence, 87 residues long: UPF0175 protein AF_0597 (87 aa).

Belongs to the UPF0175 family.

The sequence is that of UPF0175 protein AF_0597 from Archaeoglobus fulgidus (strain ATCC 49558 / DSM 4304 / JCM 9628 / NBRC 100126 / VC-16).